A 174-amino-acid polypeptide reads, in one-letter code: MKLSNKSQALYDMIAPAVEACGVDLWGIEFLPQGKRSLLRIYIDRPVDENAEPVINEDGEVEQGRGIGVEDCVRVTQQVGAMLDVHDPISGEYALEVSSPGWDRPFFQLEQLQGYIGQQVALRLIAAVENRRKFQAKLLAVDLENEEIQVEVEGKHVLDIDSNNIDKANLIYQD.

The protein belongs to the RimP family.

It is found in the cytoplasm. Required for maturation of 30S ribosomal subunits. In Acinetobacter baumannii (strain AB307-0294), this protein is Ribosome maturation factor RimP.